The following is a 121-amino-acid chain: Small ribosomal subunit protein uS11 (121 aa).

This sequence belongs to the universal ribosomal protein uS11 family. In terms of assembly, part of the 30S ribosomal subunit. Interacts with proteins S7 and S18. Binds to IF-3.

Its function is as follows. Located on the platform of the 30S subunit, it bridges several disparate RNA helices of the 16S rRNA. Forms part of the Shine-Dalgarno cleft in the 70S ribosome. This chain is Small ribosomal subunit protein uS11, found in Mycoplasma genitalium (strain ATCC 33530 / DSM 19775 / NCTC 10195 / G37) (Mycoplasmoides genitalium).